We begin with the raw amino-acid sequence, 573 residues long: MTSQGPLYIGFDLSTQQLKGLVVNSELKVVHVSKFDFDADSHGFSIKKGVLTNEAEHEVFAPVALWLQALDGVLDGLRKQGLDFSRVKGISGAGQQHGSVYWGENAESLLKSLDSSKSLEEQLSGAFSHPFSPNWQDASTQKECDEFDAFLGGPEQLAEATGSKAHHRFTGPQILRMQRKYPEVYRKTARISLVSSFLASLLLGYIAPMDISDVCGMNLWDIKKGAYNEKLLGLCAGPFGAEDLKRKLGDVPEDGGLRLGKINRYFVERYGFSSNCEILPSTGDNPATILALPLRPSDAMVSLGTSTTFLMSTPSYKPDPATHFFNHPTTPGLYMFMLCYKNGGLAREHVRDAINEKSGSGASQSWESFDKIMLETPPMGQKTESGPMKMGLFFPRPEIVPNVRSGQWRFTYDPASDTLTETEDGWNKPSDEARAIVESQMLSLRLRSRGLTQSPGDGLPPQPRRVYLVGGGSKNKAIAKVAGEILGGSDGVYKLDVGDNACALGAAYKAVWAIERKPGQTFEDLIGQRWREEEFIEKIADGYQKGVFEKYGKAVEGFERMEQQVLKQEAARK.

The substrate site is built by His-97, Arg-168, Asp-284, and Asn-285. Residues Trp-366, Gly-471–Gly-472, and Asn-475 each bind ATP.

The protein belongs to the FGGY kinase family.

The protein resides in the cytoplasm. The catalysed reaction is D-xylulose + ATP = D-xylulose 5-phosphate + ADP + H(+). In terms of biological role, highly specific D-xylulose kinase which participates in the catabolism of xylose. Xylose is a major component of hemicelluloses such as xylan. Most fungi utilize D-xylose via three enzymatic reactions, xylose reductase (XR), xylitol dehydrogenase (XDH), and xylulokinase, to form xylulose 5-phosphate, which enters pentose phosphate pathway. In Neosartorya fischeri (strain ATCC 1020 / DSM 3700 / CBS 544.65 / FGSC A1164 / JCM 1740 / NRRL 181 / WB 181) (Aspergillus fischerianus), this protein is Probable D-xylulose kinase A (xkiA).